We begin with the raw amino-acid sequence, 293 residues long: Deubiquitinase OTUD6B (293 aa).

Disordered stretches follow at residues 1–43 (MEEV…RRKQ) and 57–114 (QKHE…LEKE). One can recognise an OTU domain in the interval 147 to 284 (LQIKEISSDG…GEHYNSVEPL (138 aa)). Residues 152–158 (ISSDGHC) are cys-loop. Asp-155 is a catalytic residue. The Nucleophile role is filled by Cys-158. The segment at 219–229 (VADTAAWGGQL) is variable-loop. The his-loop stretch occupies residues 267 to 277 (YMRHAYGLGEH). His-277 is a catalytic residue.

It catalyses the reaction Thiol-dependent hydrolysis of ester, thioester, amide, peptide and isopeptide bonds formed by the C-terminal Gly of ubiquitin (a 76-residue protein attached to proteins as an intracellular targeting signal).. Functionally, deubiquitinating enzyme that may play a role in the ubiquitin-dependent regulation of different cellular processes. This chain is Deubiquitinase OTUD6B (otud6b), found in Danio rerio (Zebrafish).